A 174-amino-acid polypeptide reads, in one-letter code: Probasin (174 aa).

The signal sequence occupies residues 1 to 18 (MMRVIILLLTLHVLGVSS). Cys-77 and Cys-168 are disulfide-bonded.

The protein belongs to the calycin superfamily. Lipocalin family.

The protein localises to the secreted. This Mus musculus (Mouse) protein is Probasin (Pbsn).